A 63-amino-acid polypeptide reads, in one-letter code: Large ribosomal subunit protein uL30 (63 aa).

Belongs to the universal ribosomal protein uL30 family. As to quaternary structure, part of the 50S ribosomal subunit.

This chain is Large ribosomal subunit protein uL30, found in Xanthomonas campestris pv. campestris (strain 8004).